The primary structure comprises 249 residues: tRNA pseudouridine synthase A (249 aa).

Residue aspartate 53 is the Nucleophile of the active site. Tyrosine 111 is a binding site for substrate.

It belongs to the tRNA pseudouridine synthase TruA family. In terms of assembly, homodimer.

The enzyme catalyses uridine(38/39/40) in tRNA = pseudouridine(38/39/40) in tRNA. Formation of pseudouridine at positions 38, 39 and 40 in the anticodon stem and loop of transfer RNAs. This chain is tRNA pseudouridine synthase A, found in Streptococcus equi subsp. zooepidemicus (strain MGCS10565).